Here is a 430-residue protein sequence, read N- to C-terminus: Ethylene-responsive transcription factor WRI1 (430 aa).

Residues Met1–Ser26 are compositionally biased toward low complexity. Residues Met1–Tyr66 form a disordered region. Polar residues predominate over residues Asn53–Ser63. Positions Ile65–Pro131 form a DNA-binding region, AP2/ERF 1. Position 70 is a phosphothreonine; by KIN10 (Thr70). At Ser166 the chain carries Phosphoserine; by KIN10. A DNA-binding region (AP2/ERF 2) is located at residues Lys167–Asp225. Residues Val260–Lys274 show a composition bias toward basic and acidic residues. Disordered regions lie at residues Val260–Glu297 and Ser398–Thr422.

This sequence belongs to the AP2/ERF transcription factor family. AP2 subfamily. As to quaternary structure, interacts with KIN10 and KIN11. Post-translationally, ubiquitinated. In terms of processing, the phosphorylation at Thr-70 and Ser-166 by KIN10 facilitates its degradation via the proteasomal pathway. As to expression, mostly expressed in siliques, especially in seeds. Also detected in roots and flowers, and, to a lower extent, in leaves stems and seedlings.

The protein resides in the nucleus. Down-regulated by KIN10 that controls its protein stability under a phosphorylation-dependent manner. May be involved in the regulation of gene expression by stress factors and by components of stress signal transduction pathways. Transcriptional activator involved in the activation of a subset of sugar-responsive genes and the control of carbon flow from sucrose import to oil accumulation in developing seeds. Binds to the GCC-box pathogenesis-related promoter element. Promotes sugar uptake and seed oil accumulation by glycolysis. Required for embryo development, seed germination and, indirectly, for seedling establishment. Negative regulator of the ABA-mediated germination inhibition. The chain is Ethylene-responsive transcription factor WRI1 (WRI1) from Arabidopsis thaliana (Mouse-ear cress).